The primary structure comprises 137 residues: Small ribosomal subunit protein uS12 (137 aa).

Disordered stretches follow at residues 1 to 21 and 33 to 57; these read MPTI…KSDS and KVQT…TPKK.

This sequence belongs to the universal ribosomal protein uS12 family. Part of the 30S ribosomal subunit. Contacts proteins S8 and S17. May interact with IF1 in the 30S initiation complex.

Functionally, with S4 and S5 plays an important role in translational accuracy. In terms of biological role, interacts with and stabilizes bases of the 16S rRNA that are involved in tRNA selection in the A site and with the mRNA backbone. Located at the interface of the 30S and 50S subunits, it traverses the body of the 30S subunit contacting proteins on the other side and probably holding the rRNA structure together. The combined cluster of proteins S8, S12 and S17 appears to hold together the shoulder and platform of the 30S subunit. The sequence is that of Small ribosomal subunit protein uS12 from Streptococcus pyogenes serotype M1.